Reading from the N-terminus, the 524-residue chain is Inosine-5'-monophosphate dehydrogenase 4 (524 aa).

CBS domains are found at residues 122-183 (FINS…VVSE) and 185-241 (MTKN…PLAS). Ser-125 carries the phosphoserine modification. NAD(+)-binding positions include 279–281 (DSS) and 329–331 (GMG). K(+) is bound by residues Gly-331 and Gly-333. Ser-334 is a binding site for IMP. Position 336 (Cys-336) interacts with K(+). The active-site Thioimidate intermediate is the Cys-336. IMP contacts are provided by residues 369 to 371 (DGG), 392 to 393 (GG), and 416 to 420 (YRGMG). Arg-438 (proton acceptor) is an active-site residue. An IMP-binding site is contributed by Gln-450. K(+) contacts are provided by Glu-509, Gly-510, and Gly-511.

This sequence belongs to the IMPDH/GMPR family. As to quaternary structure, homotetramer. Seems to be able to form heterotetramers composed from more than 1 of the 3 IMPDH gene products (IMD2-4). K(+) serves as cofactor.

It localises to the cytoplasm. The catalysed reaction is IMP + NAD(+) + H2O = XMP + NADH + H(+). It functions in the pathway purine metabolism; XMP biosynthesis via de novo pathway; XMP from IMP: step 1/1. Its activity is regulated as follows. Mycophenolic acid (MPA) is a non-competitive inhibitor that prevents formation of the closed enzyme conformation by binding to the same site as the amobile flap. In contrast, mizoribine monophosphate (MZP) is a competitive inhibitor that induces the closed conformation. MPA is a potent inhibitor of mammalian IMPDHs but a poor inhibitor of the bacterial enzymes. MZP is a more potent inhibitor of bacterial IMPDH. Its function is as follows. Catalyzes the conversion of inosine 5'-phosphate (IMP) to xanthosine 5'-phosphate (XMP), the first committed and rate-limiting step in the de novo synthesis of guanine nucleotides, and therefore plays an important role in the regulation of cell growth. This is Inosine-5'-monophosphate dehydrogenase 4 from Saccharomyces cerevisiae (strain ATCC 204508 / S288c) (Baker's yeast).